Consider the following 177-residue polypeptide: Ribosome rescue factor SmrB (177 aa).

A Smr domain is found at leucine 92–glutamate 167.

This sequence belongs to the SmrB family. As to quaternary structure, associates with collided ribosomes, but not with correctly translating polysomes.

Functionally, acts as a ribosome collision sensor. Detects stalled/collided disomes (pairs of ribosomes where the leading ribosome is stalled and a second ribosome has collided with it) and endonucleolytically cleaves mRNA at the 5' boundary of the stalled ribosome. Stalled/collided disomes form a new interface (primarily via the 30S subunits) that binds SmrB. Cleaved mRNA becomes available for tmRNA ligation, leading to ribosomal subunit dissociation and rescue of stalled ribosomes. The chain is Ribosome rescue factor SmrB from Haemophilus ducreyi (strain 35000HP / ATCC 700724).